We begin with the raw amino-acid sequence, 269 residues long: Hydroxyethylthiazole kinase (269 aa).

M41 lines the substrate pocket. Positions 117 and 165 each coordinate ATP. Position 192 (G192) interacts with substrate.

Belongs to the Thz kinase family. The cofactor is Mg(2+).

The enzyme catalyses 5-(2-hydroxyethyl)-4-methylthiazole + ATP = 4-methyl-5-(2-phosphooxyethyl)-thiazole + ADP + H(+). Its pathway is cofactor biosynthesis; thiamine diphosphate biosynthesis; 4-methyl-5-(2-phosphoethyl)-thiazole from 5-(2-hydroxyethyl)-4-methylthiazole: step 1/1. In terms of biological role, catalyzes the phosphorylation of the hydroxyl group of 4-methyl-5-beta-hydroxyethylthiazole (THZ). This Actinobacillus succinogenes (strain ATCC 55618 / DSM 22257 / CCUG 43843 / 130Z) protein is Hydroxyethylthiazole kinase.